A 442-amino-acid polypeptide reads, in one-letter code: DNA topoisomerase medium subunit (442 aa).

One can recognise a Topo IIA-type catalytic domain in the interval 29–438; that stretch reads IPNMIDGFKP…DVVTEYTKDL (410 aa). Catalysis depends on tyrosine 117, which acts as the O-(5'-phospho-DNA)-tyrosine intermediate.

Belongs to the type II topoisomerase family. Part of the DNA topoisomerase complex made of gp39, gp52 and gp60. The cofactor is Mg(2+).

It catalyses the reaction ATP-dependent breakage, passage and rejoining of double-stranded DNA.. Functionally, medium subunit of the DNA topoisomerase that untwists superhelical DNA. Controls topological states of double-stranded DNA by transient breakage and subsequent rejoining of DNA strands. The chain is DNA topoisomerase medium subunit (52) from Enterobacteria phage T4 (Bacteriophage T4).